The following is a 500-amino-acid chain: UBX domain-containing protein 5 (500 aa).

Residues 50 to 61 (SNNTPTPSNSTP) are compositionally biased toward low complexity. The tract at residues 50–70 (SNNTPTPSNSTPMAPTSVDSD) is disordered. Ser-139 bears the Phosphoserine mark. Disordered stretches follow at residues 142 to 169 (NQRL…EEND) and 371 to 399 (ESLN…QEPD). Positions 148–161 (TNTNTYINDNSSDS) are enriched in low complexity. Residues 415–493 (KPGITTRIQI…GLKNSSLLLE (79 aa)) enclose the UBX domain.

In terms of assembly, interacts with CDC48.

It is found in the nucleus. The protein resides in the cytoplasm. Its function is as follows. Involved in CDC48-dependent protein degradation through the ubiquitin/proteasome pathway. The chain is UBX domain-containing protein 5 (UBX5) from Saccharomyces cerevisiae (strain ATCC 204508 / S288c) (Baker's yeast).